Here is a 365-residue protein sequence, read N- to C-terminus: MNIMDFNVKKLAADAGTFLSRAVQFTEEKLGQAEKTELDAHLENLLSKAECTKIWTEKIMKQTEVLLQPNPNARIEEFVYEKLDRKAPSRINNPELLGQYMIDAGTEFGPGTAYGNALIKCGETQKRIGTADRELIQTSALNFLTPLRNFIEGDYKTIAKERKLLQNKRLDLDAAKTRLKKAKAAETRASSEQELRITQSEFDRQAEITRLLLEGISSTHAHHLRCLNDFVEAQMTYYAQCYQYMLDLQKQLGSFPSNYHSNNNQTAVAPVPSASSNVIGSSALTSTSSLVITSPSNLTDLKECGGSRRARVLYDYDAANSTELSLLADEVITVFSVVGMDSDWLMGERGNQKGRVPITYLELLN.

N-acetylmethionine is present on methionine 1. A membrane-binding amphipathic helix region spans residues 1–30; that stretch reads MNIMDFNVKKLAADAGTFLSRAVQFTEEKL. Positions 1-37 are required for membrane binding; the sequence is MNIMDFNVKKLAADAGTFLSRAVQFTEEKLGQAEKTE. Residues 27–261 enclose the BAR domain; the sequence is EEKLGQAEKT…LGSFPSNYHS (235 aa). Threonine 145 is subject to Phosphothreonine; by CDK5. Residues 155-195 are a coiled coil; it reads YKTIAKERKLLQNKRLDLDAAKTRLKKAKAAETRASSEQEL. The SH3 domain occupies 305 to 365; sequence GGSRRARVLY…VPITYLELLN (61 aa).

It belongs to the endophilin family. Homodimer, and heterodimer with SH3GLB2. Binds BAX; induction of apoptosis augments BAX binding. Binds DNM1, HTT, AMPH, BIN1 and ARFGAP1. Interacts with UVRAG; UVRAG bridges the interaction to BECN1 indicative for an association with the PI3K complex II (PI3KC3-C2). In terms of processing, phosphorylated at Thr-145 by CDK5; this phosphorylation is required for autophagy induction in starved neurons and facilitates homodimerization.

It localises to the cytoplasm. The protein localises to the golgi apparatus membrane. The protein resides in the mitochondrion outer membrane. Its subcellular location is the cytoplasmic vesicle. It is found in the autophagosome membrane. It localises to the midbody. Functionally, may be required for normal outer mitochondrial membrane dynamics. Required for coatomer-mediated retrograde transport in certain cells. May recruit other proteins to membranes with high curvature. May promote membrane fusion. Involved in activation of caspase-dependent apoptosis by promoting BAX/BAK1 activation. Involved in caspase-independent apoptosis during nutrition starvation and involved in the regulation of autophagy. Activates lipid kinase activity of PIK3C3 during autophagy probably by associating with the PI3K complex II (PI3KC3-C2). Associated with PI3KC3-C2 during autophagy may regulate the trafficking of ATG9A from the Golgi complex to the peripheral cytoplasm for the formation of autophagosomes by inducing Golgi membrane tubulation and fragmentation. Involved in regulation of degradative endocytic trafficking and cytokinesis, probably in the context of PI3KC3-C2. This Bos taurus (Bovine) protein is Endophilin-B1 (SH3GLB1).